The chain runs to 284 residues: MGEIIDGKKLAKEIQEKVTREVAELVKEGKQPGLAVVLVGDNQASRTYVRNKQKRTEEAGMKSVLIELPENVTEEKLLSVVEELNEDKTIHGILVQLPLPEHISEEKVIDTISFDKDVDGFHPVNVGNLFIGKDSFVPCTPAGIIELIKSTGTQIEGKRAVVIGRSNIVGKPVAQLLLNENATVTIAHSRTKDLPQVAKEADILVVATGLAKFVKKDYIKPGAIVIDVGMDRDENNKLCGDVDFDDVVQEAGFITPVPGGVGPMTITMLLANTLKAAKRIWKMN.

NADP(+) is bound by residues 164-166 (GRS) and Ser189.

This sequence belongs to the tetrahydrofolate dehydrogenase/cyclohydrolase family. In terms of assembly, homodimer.

It catalyses the reaction (6R)-5,10-methylene-5,6,7,8-tetrahydrofolate + NADP(+) = (6R)-5,10-methenyltetrahydrofolate + NADPH. The enzyme catalyses (6R)-5,10-methenyltetrahydrofolate + H2O = (6R)-10-formyltetrahydrofolate + H(+). It participates in one-carbon metabolism; tetrahydrofolate interconversion. Its function is as follows. Catalyzes the oxidation of 5,10-methylenetetrahydrofolate to 5,10-methenyltetrahydrofolate and then the hydrolysis of 5,10-methenyltetrahydrofolate to 10-formyltetrahydrofolate. In Listeria monocytogenes serovar 1/2a (strain ATCC BAA-679 / EGD-e), this protein is Bifunctional protein FolD.